A 214-amino-acid chain; its full sequence is rRNA methyltransferase 2, mitochondrial (214 aa).

The N-terminal 18 residues, 1 to 18 (MFSTKKSQGNLHKYIQRQ), are a transit peptide targeting the mitochondrion. Residues 63-66 (PGSW), Asp-83, 100-101 (DI), and Asp-125 contribute to the S-adenosyl-L-methionine site. Lys-169 acts as the Proton acceptor in catalysis.

Belongs to the class I-like SAM-binding methyltransferase superfamily. RNA methyltransferase RlmE family.

It localises to the mitochondrion. It catalyses the reaction a uridine in rRNA + S-adenosyl-L-methionine = a 2'-O-methyluridine in rRNA + S-adenosyl-L-homocysteine + H(+). In terms of biological role, S-adenosyl-L-methionine-dependent 2'-O-ribose methyltransferase that catalyzes the formation of 2'-O-methyluridine at position 808 (Um808) in the mitochondrial large subunit ribosomal RNA (mtLSU rRNA), a universally conserved modification in the peptidyl transferase domain of the mtLSU rRNA. This activity may require prior 2'-O-methylguanosine modification at position 809 (Gm809) by MRM3. Essential for late-stage assembly of mtLSU required for efficient translation of mitochondrial DNA encoded proteins; methyltransferase activity is not required for this function. Essential for mitochondrial respiratory function. The polypeptide is rRNA methyltransferase 2, mitochondrial (Caenorhabditis elegans).